Consider the following 419-residue polypeptide: DNA ligase (419 aa).

Positions 1–120 (MLNHFPGHCS…ARQKRGAHTN (120 aa)) are NTD. An AD domain region spans residues 121 to 317 (TGMIPPMLVK…NYHSAHLAKL (197 aa)). Lys-151 acts as the N6-AMP-lysine intermediate in catalysis. The tract at residues 318–419 (KPLLDAEFIL…REPINVLEII (102 aa)) is OB domain.

Belongs to the ATP-dependent DNA ligase family.

Its subcellular location is the virion. It carries out the reaction ATP + (deoxyribonucleotide)n-3'-hydroxyl + 5'-phospho-(deoxyribonucleotide)m = (deoxyribonucleotide)n+m + AMP + diphosphate.. In terms of biological role, very low-fidelity DNA ligase that seals nicks in double-stranded DNA during DNA repair. Together with the viral repair DNA polymerase X, fills the single nucleotide gaps generated by the AP endonuclease. It is not essential for viral replication and recombination. Displays a very low adenylation activity towards DNA with 3'-dideoxy- or 3'-amino-terminated nicks compared to regular nick DNA. This is DNA ligase from Ornithodoros (relapsing fever ticks).